We begin with the raw amino-acid sequence, 395 residues long: ATP phosphoribosyltransferase regulatory subunit (395 aa).

Belongs to the class-II aminoacyl-tRNA synthetase family. HisZ subfamily. As to quaternary structure, heteromultimer composed of HisG and HisZ subunits.

The protein localises to the cytoplasm. It functions in the pathway amino-acid biosynthesis; L-histidine biosynthesis; L-histidine from 5-phospho-alpha-D-ribose 1-diphosphate: step 1/9. Functionally, required for the first step of histidine biosynthesis. May allow the feedback regulation of ATP phosphoribosyltransferase activity by histidine. This is ATP phosphoribosyltransferase regulatory subunit from Stutzerimonas stutzeri (Pseudomonas stutzeri).